The sequence spans 38 residues: Large ribosomal subunit protein bL36 (38 aa).

It belongs to the bacterial ribosomal protein bL36 family.

This is Large ribosomal subunit protein bL36 from Synechococcus sp. (strain JA-2-3B'a(2-13)) (Cyanobacteria bacterium Yellowstone B-Prime).